Reading from the N-terminus, the 229-residue chain is Large ribosomal subunit protein uL1 (229 aa).

Part of the 50S ribosomal subunit.

In terms of biological role, directly binds to 23S rRNA. Forms what is known as the L1 stalk, which protrudes beyond the 70S ribosome surface. The stalk is preferentially stabilized in 70S versus 50S crystals. Interacts with the E site tRNA, blocking the exit path. This blockage implies that this section of the ribosome must be able to move to release the deacetylated tRNA. Its function is as follows. Protein L1 is also a translational repressor protein, it controls the translation of the L11 operon by binding to its mRNA. The sequence is that of Large ribosomal subunit protein uL1 (rplA) from Thermus thermophilus (strain ATCC 27634 / DSM 579 / HB8).